Here is a 555-residue protein sequence, read N- to C-terminus: Tetracycline 7-halogenase (555 aa).

22 to 27 contacts FAD; sequence GSGLSG.

Belongs to the flavin-dependent halogenase family. Bacterial tryptophan halogenase subfamily. As to quaternary structure, homodimer.

It carries out the reaction tetracycline + FADH2 + chloride + O2 = 7-chlorotetracycline + FAD + 2 H2O + H(+). The protein operates within antibiotic biosynthesis. In terms of biological role, involved in the biosynthesis of chlorotetracycline (CTC), an important member from antibiotics tetracycline (TC) family, which inhibits protein synthesis in bacteria and is widely involved in clinical therapy, animal feeds and aquaculture. Utilizes FADH(2) supplied by the flavin reductase CtcQ, to catalyze the chlorination of tetracycline (TC) at C7 position, leading to the production of 7-chlorotetracycline. The enzyme forms a lysine chloramine intermediate on an internal lysine residue before transferring the chlorine to the substrate. It is stereo-selective for the 4S (natural) isomer of tetracycline. The chain is Tetracycline 7-halogenase from Kitasatospora aureofaciens (Streptomyces aureofaciens).